Consider the following 331-residue polypeptide: UPF0194 membrane protein YbhG (331 aa).

The signal sequence occupies residues 1–19; that stretch reads MKKPVVIGLAIAAIVAVIA. Positions 107–208 form a coiled coil; the sequence is EEIAQAAAAV…LDLQDTTLIA (102 aa).

This sequence belongs to the UPF0194 family.

It is found in the periplasm. This Salmonella heidelberg (strain SL476) protein is UPF0194 membrane protein YbhG.